The sequence spans 572 residues: Potassium-transporting ATPase potassium-binding subunit (572 aa).

11 helical membrane passes run 5-25 (LAAG…YVPL), 71-91 (VGYT…LYVL), 97-117 (VLPL…NTAV), 142-162 (GLAV…VALI), 188-208 (ILLP…TIQS), 258-278 (PTPL…VCLT), 292-312 (LTVL…VTWA), 387-407 (GLYG…LLVG), 422-442 (ITMA…GTGI), 500-520 (LGMA…ALAG), and 548-568 (GTVL…GPIA).

This sequence belongs to the KdpA family. As to quaternary structure, the system is composed of three essential subunits: KdpA, KdpB and KdpC.

The protein resides in the cell membrane. Part of the high-affinity ATP-driven potassium transport (or Kdp) system, which catalyzes the hydrolysis of ATP coupled with the electrogenic transport of potassium into the cytoplasm. This subunit binds the extracellular potassium ions and delivers the ions to the membrane domain of KdpB through an intramembrane tunnel. The sequence is that of Potassium-transporting ATPase potassium-binding subunit from Mycobacteroides abscessus (strain ATCC 19977 / DSM 44196 / CCUG 20993 / CIP 104536 / JCM 13569 / NCTC 13031 / TMC 1543 / L948) (Mycobacterium abscessus).